Here is a 258-residue protein sequence, read N- to C-terminus: Putative L-lactate dehydrogenase operon regulatory protein (258 aa).

The HTH gntR-type domain maps to 6 to 74 (RRLSDEVADR…RGGGTFIRWR (69 aa)). The segment at residues 34–53 (ERQLAMQLGVSRNSLREALA) is a DNA-binding region (H-T-H motif).

May be a regulatory protein for the LCT genes. This chain is Putative L-lactate dehydrogenase operon regulatory protein (lldR), found in Escherichia coli (strain K12).